Consider the following 642-residue polypeptide: Chaperone protein DnaK (642 aa).

Threonine 200 carries the phosphothreonine; by autocatalysis modification. Low complexity predominate over residues 608 to 618 (QAESQAAGEGQ). A disordered region spans residues 608-642 (QAESQAAGEGQPDAGKKDDGNVVDAEFEEVKKDKQ).

The protein belongs to the heat shock protein 70 family.

Its function is as follows. Acts as a chaperone. This Laribacter hongkongensis (strain HLHK9) protein is Chaperone protein DnaK.